We begin with the raw amino-acid sequence, 353 residues long: Thiamine thiazole synthase 1, chloroplastic (353 aa).

The N-terminal 48 residues, 1–48 (MATLTSSICSKPKASVFDPHKSSFHGVPIATQARLSPVKSTPVNLAVT), are a transit peptide targeting the chloroplast. Residues A97, 117–118 (EQ), G125, and A190 contribute to the substrate site. C219 is subject to 2,3-didehydroalanine (Cys). Residues D221, H236, M288, and 298-300 (RMG) each bind substrate.

The protein belongs to the THI4 family. In terms of assembly, homooctamer. Fe cation is required as a cofactor. In terms of processing, during the catalytic reaction, a sulfide is transferred from Cys-219 to a reaction intermediate, generating a dehydroalanine residue.

It localises to the plastid. The protein resides in the chloroplast. It carries out the reaction [ADP-thiazole synthase]-L-cysteine + glycine + NAD(+) = [ADP-thiazole synthase]-dehydroalanine + ADP-5-ethyl-4-methylthiazole-2-carboxylate + nicotinamide + 3 H2O + 2 H(+). In terms of biological role, involved in biosynthesis of the thiamine precursor thiazole. Catalyzes the conversion of NAD and glycine to adenosine diphosphate 5-(2-hydroxyethyl)-4-methylthiazole-2-carboxylic acid (ADT), an adenylated thiazole intermediate. The reaction includes an iron-dependent sulfide transfer from a conserved cysteine residue of the protein to a thiazole intermediate. The enzyme can only undergo a single turnover, which suggests it is a suicide enzyme. May have additional roles in adaptation to various stress conditions and in DNA damage tolerance. This is Thiamine thiazole synthase 1, chloroplastic from Vitis vinifera (Grape).